The sequence spans 187 residues: Small ribosomal subunit protein uS5 (187 aa).

The tract at residues 1-20 (MAERENRRDRRDDRSREETP) is disordered. Positions 22–85 (FADRLVAINR…EQAKRQMIRV (64 aa)) constitute an S5 DRBM domain.

The protein belongs to the universal ribosomal protein uS5 family. As to quaternary structure, part of the 30S ribosomal subunit. Contacts proteins S4 and S8.

Its function is as follows. With S4 and S12 plays an important role in translational accuracy. Functionally, located at the back of the 30S subunit body where it stabilizes the conformation of the head with respect to the body. The sequence is that of Small ribosomal subunit protein uS5 from Cereibacter sphaeroides (strain ATCC 17029 / ATH 2.4.9) (Rhodobacter sphaeroides).